Reading from the N-terminus, the 147-residue chain is Hemoglobin subunit beta (147 aa).

Serine 2 is subject to N-acetylserine. One can recognise a Globin domain in the interval 3–147 (FLSAEEKNLV…VASALAHRYH (145 aa)). Serine 45 bears the Phosphoserine mark. N6-acetyllysine is present on lysine 60. Histidine 64 contributes to the heme b binding site. At lysine 83 the chain carries N6-acetyllysine. Histidine 93 lines the heme b pocket. Cysteine 94 bears the S-nitrosocysteine mark.

This sequence belongs to the globin family. In terms of assembly, heterotetramer of two alpha chains and two beta chains. Red blood cells.

Involved in oxygen transport from the lung to the various peripheral tissues. The chain is Hemoglobin subunit beta (HBB) from Panthera pardus orientalis (Amur leopard).